A 333-amino-acid polypeptide reads, in one-letter code: Isoaspartyl peptidase/L-asparaginase (333 aa).

Residue Thr-191 is the Nucleophile of the active site. Residues 219-222 (RVGD) and 242-245 (TGHG) contribute to the substrate site.

The protein belongs to the Ntn-hydrolase family. In terms of assembly, heterodimer of an alpha and beta chain produced by autocleavage. This heterodimer may then dimerize in turn, giving rise to a heterotetramer. Cleaved into an alpha and beta chain by autocatalysis; this activates the enzyme. The N-terminal residue of the beta subunit is responsible for the nucleophile hydrolase activity. Present in testis, brain, liver, kidney, heart and skeletal muscle. In brain, specifically present in the astrocytic lineage. Present in sperm (at protein level).

Its subcellular location is the cytoplasm. The enzyme catalyses L-asparagine + H2O = L-aspartate + NH4(+). It catalyses the reaction Cleavage of a beta-linked Asp residue from the N-terminus of a polypeptide.. Functionally, has both L-asparaginase and beta-aspartyl peptidase activity. Is highly active with L-Asp beta-methyl ester. Besides, has catalytic activity toward beta-aspartyl dipeptides and their methyl esters, including beta-L-Asp-L-Phe, beta-L-Asp-L-Phe methyl ester (aspartame), beta-L-Asp-L-Ala, beta-L-Asp-L-Leu and beta-L-Asp-L-Lys. Does not have aspartylglucosaminidase activity and is inactive toward GlcNAc-L-Asn. Likewise, has no activity toward glutamine. May be involved in the production of L-aspartate, which can act as an excitatory neurotransmitter in some brain regions. The sequence is that of Isoaspartyl peptidase/L-asparaginase (Asrgl1) from Rattus norvegicus (Rat).